Consider the following 474-residue polypeptide: Glutamate--tRNA ligase (474 aa).

The short motif at 10–20 (PSPTGYLHIGG) is the 'HIGH' region element. 4 residues coordinate Zn(2+): Cys107, Cys109, Cys134, and Asp136. Residues 244–248 (RLSKR) carry the 'KMSKS' region motif. Lys247 lines the ATP pocket.

This sequence belongs to the class-I aminoacyl-tRNA synthetase family. Glutamate--tRNA ligase type 1 subfamily. Monomer. The cofactor is Zn(2+).

It is found in the cytoplasm. The enzyme catalyses tRNA(Glu) + L-glutamate + ATP = L-glutamyl-tRNA(Glu) + AMP + diphosphate. In terms of biological role, catalyzes the attachment of glutamate to tRNA(Glu) in a two-step reaction: glutamate is first activated by ATP to form Glu-AMP and then transferred to the acceptor end of tRNA(Glu). In Anaeromyxobacter dehalogenans (strain 2CP-C), this protein is Glutamate--tRNA ligase.